A 466-amino-acid chain; its full sequence is Phytase A (466 aa).

An N-terminal signal peptide occupies residues 1-19; sequence MGFLAIVLSVALLFRSTSG. A disulfide bridge links cysteine 31 with cysteine 40. Residues tyrosine 51, arginine 81, histidine 82, arginine 85, and threonine 88 each coordinate 1D-myo-inositol hexakisphosphate. Disulfide bonds link cysteine 71–cysteine 414, cysteine 215–cysteine 465, cysteine 264–cysteine 282, and cysteine 436–cysteine 444. Histidine 82 acts as the Nucleophile in catalysis. N-linked (GlcNAc...) asparagine glycosylation is present at asparagine 120. Arginine 165 contacts 1D-myo-inositol hexakisphosphate. Residues asparagine 207 and asparagine 230 are each glycosylated (N-linked (GlcNAc...) asparagine). Lysine 301 provides a ligand contact to 1D-myo-inositol hexakisphosphate. Residues asparagine 339 and asparagine 352 are each glycosylated (N-linked (GlcNAc...) asparagine). Histidine 361 and aspartate 362 together coordinate 1D-myo-inositol hexakisphosphate. Asparagine 376 carries an N-linked (GlcNAc...) asparagine glycan.

Belongs to the histidine acid phosphatase family. As to quaternary structure, monomer.

It is found in the secreted. The catalysed reaction is 1D-myo-inositol hexakisphosphate + H2O = 1D-myo-inositol 1,2,4,5,6-pentakisphosphate + phosphate. The enzyme catalyses 1D-myo-inositol 1,2,4,5,6-pentakisphosphate + H2O = 1D-myo-inositol 1,2,5,6-tetrakisphosphate + phosphate. It carries out the reaction 1D-myo-inositol 1,2,5,6-tetrakisphosphate + H2O = 1D-myo-inositol 1,2,6-trisphosphate + phosphate. It catalyses the reaction 1D-myo-inositol 1,2,6-trisphosphate + H2O = 1D-myo-inositol 1,2-bisphosphate + phosphate. The catalysed reaction is 1D-myo-inositol 1,2-bisphosphate + H2O = 1D-myo-inositol 2-phosphate + phosphate. In terms of biological role, catalyzes the phosphate monoester hydrolysis of phytic acid (myo-inositol hexakisphosphate), which results in the stepwise formation of myo-inositol pentakis-, tetrakis-, tris-, bis-, and monophosphates, as well as the liberation of inorganic phosphate. Myo-inositol 2-monophosphate is the end product. Has a broad substrate specificity and is also able to dephosphorylate other classic acid phosphatase substrates such as p-nitrophenyl phosphate, phenyl phosphate, fructose 1,6-bisphosphate, glucose 6-phosphate, 3-phosphoglycerate, as well as ADP and ATP. The polypeptide is Phytase A (Aspergillus terreus).